A 169-amino-acid polypeptide reads, in one-letter code: Thaumatin-like pathogenesis-related protein 2 (169 aa).

Residues 1–21 (MATSSAVLFFLLAVFAAGASA) form the signal peptide.

It belongs to the thaumatin family.

In terms of biological role, associated with resistance against stem rust fungi. This is Thaumatin-like pathogenesis-related protein 2 (RASTL-2) from Avena sativa (Oat).